The primary structure comprises 55 residues: COP9 signalosome complex subunit 3 (55 aa).

The PCI domain occupies 1-52 (KSIQGLSASPGDLSALHGKEAEMHVLQMIQDGQIHALINQKDGMVRFLEDPE).

The protein belongs to the CSN3 family. In terms of assembly, component of the CSN complex, probably composed of CSN1, CSN2, CSN3, CSN4, CSN5 (CSN5A or CSN5B), CSN6 (CSN6A or CSN6B), CSN7 and CSN8.

It is found in the cytoplasm. The protein resides in the nucleus. In terms of biological role, component of the COP9 signalosome complex (CSN), a complex involved in various cellular and developmental processes such as photomorphogenesis and auxin and jasmonate responses. The CSN complex is an essential regulator of the ubiquitin (Ubl) conjugation pathway by mediating the deneddylation of the cullin subunits of SCF-type E3 ligase complexes, leading to decrease the Ubl ligase activity of SCF. It is involved in repression of photomorphogenesis in darkness by regulating the activity of COP1-containing Ubl ligase complexes. This chain is COP9 signalosome complex subunit 3 (CSN3), found in Brassica oleracea (Wild cabbage).